A 105-amino-acid chain; its full sequence is uncharacterized protein (105 aa).

The ABM domain occupies 14–104 (HYITACLKII…VEWLMKSNVN (91 aa)).

This is an uncharacterized protein from Bacillus subtilis (strain 168).